The following is a 270-amino-acid chain: Carboxy-terminal domain RNA polymerase II polypeptide A small phosphatase 2 (270 aa).

S5 is modified (phosphoserine). The 159-residue stretch at 96–254 (QDQGRICVVI…LNLIPVFEEL (159 aa)) folds into the FCP1 homology domain. D106 acts as the 4-aspartylphosphate intermediate in catalysis. The Mg(2+) site is built by D106, D108, and N217. The active-site Proton donor is the D108.

As to quaternary structure, monomer. Interacts with REST. Requires Mg(2+) as cofactor. As to expression, expression is restricted to non-neuronal tissues.

Its subcellular location is the nucleus. It catalyses the reaction O-phospho-L-seryl-[protein] + H2O = L-seryl-[protein] + phosphate. The catalysed reaction is O-phospho-L-threonyl-[protein] + H2O = L-threonyl-[protein] + phosphate. Its function is as follows. Preferentially catalyzes the dephosphorylation of 'Ser-5' within the tandem 7 residue repeats in the C-terminal domain (CTD) of the largest RNA polymerase II subunit POLR2A. Negatively regulates RNA polymerase II transcription, possibly by controlling the transition from initiation/capping to processive transcript elongation. Recruited by REST to neuronal genes that contain RE-1 elements, leading to neuronal gene silencing in non-neuronal cells. This is Carboxy-terminal domain RNA polymerase II polypeptide A small phosphatase 2 (Ctdsp2) from Mus musculus (Mouse).